A 134-amino-acid chain; its full sequence is Profilin-2 (134 aa).

A disulfide bridge links Cys13 with Cys118. Residues 84–100 (AVIRGKKGSGGITIKET) carry the Involved in PIP2 interaction motif. Residue Thr114 is modified to Phosphothreonine.

The protein belongs to the profilin family. In terms of assembly, occurs in many kinds of cells as a complex with monomeric actin in a 1:1 ratio. In terms of processing, phosphorylated by MAP kinases.

It localises to the cytoplasm. The protein resides in the cytoskeleton. Its function is as follows. Binds to actin and affects the structure of the cytoskeleton. At high concentrations, profilin prevents the polymerization of actin, whereas it enhances it at low concentrations. The sequence is that of Profilin-2 from Olea europaea (Common olive).